We begin with the raw amino-acid sequence, 1025 residues long: Retinoblastoma-related protein (1025 aa).

A disordered region spans residues 1–20 (MEDHPPKPSIPTADASLSNH). Positions 422–623 (TPVTTAMTTA…EKGSSMYNSL (202 aa)) are domain A. The pocket stretch occupies residues 422–875 (TPVTTAMTTA…NEIFIPAVKP (454 aa)). The segment at 624–744 (TVARPALSAE…PGAGGETCAE (121 aa)) is spacer. The domain B stretch occupies residues 745-875 (TAINVFFSKI…NEIFIPAVKP (131 aa)).

Belongs to the retinoblastoma protein (RB) family.

It localises to the nucleus. Functionally, regulator of biological processes that recruits a histone deacetylase to control gene transcription. May play a role in the entry into mitosis, negatively regulating the cell proliferation. Formation of stable complexes with geminiviridae replication-associated proteins may create a cellular environment which favors viral DNA replication. This chain is Retinoblastoma-related protein (pRB), found in Camellia sinensis (Tea plant).